The following is a 75-amino-acid chain: Conotoxin Vn5.6 (75 aa).

The first 19 residues, 1–19 (MLCLPVFIILLLLASPAAP), serve as a signal peptide directing secretion. A propeptide spanning residues 20–59 (NPLEKRIQSDLIRAALEDADMKTGEREILNIIDSISDVAK) is cleaved from the precursor. Gln60 is subject to Pyrrolidone carboxylic acid.

Belongs to the conotoxin T superfamily. Contains 2 disulfide bonds that can be either 'C1-C3, C2-C4' or 'C1-C4, C2-C3', since these disulfide connectivities have been observed for conotoxins with cysteine framework V (for examples, see AC P0DQQ7 and AC P81755). As to expression, expressed by the venom duct.

The protein localises to the secreted. The polypeptide is Conotoxin Vn5.6 (Conus ventricosus (Mediterranean cone)).